The chain runs to 131 residues: Small ribosomal subunit protein uS11 (131 aa).

Belongs to the universal ribosomal protein uS11 family. Part of the 30S ribosomal subunit. Interacts with proteins S7 and S18. Binds to IF-3.

Its function is as follows. Located on the platform of the 30S subunit, it bridges several disparate RNA helices of the 16S rRNA. Forms part of the Shine-Dalgarno cleft in the 70S ribosome. This Trichormus variabilis (strain ATCC 29413 / PCC 7937) (Anabaena variabilis) protein is Small ribosomal subunit protein uS11.